A 557-amino-acid polypeptide reads, in one-letter code: Dihydroxy-acid dehydratase (557 aa).

Asp-78 serves as a coordination point for Mg(2+). Cys-119 contacts [2Fe-2S] cluster. Mg(2+)-binding residues include Asp-120 and Lys-121. Lys-121 bears the N6-carboxylysine mark. Cys-192 contacts [2Fe-2S] cluster. Glu-442 is a binding site for Mg(2+). The active-site Proton acceptor is the Ser-468.

Belongs to the IlvD/Edd family. As to quaternary structure, homodimer. The cofactor is [2Fe-2S] cluster. Requires Mg(2+) as cofactor.

It carries out the reaction (2R)-2,3-dihydroxy-3-methylbutanoate = 3-methyl-2-oxobutanoate + H2O. The enzyme catalyses (2R,3R)-2,3-dihydroxy-3-methylpentanoate = (S)-3-methyl-2-oxopentanoate + H2O. The protein operates within amino-acid biosynthesis; L-isoleucine biosynthesis; L-isoleucine from 2-oxobutanoate: step 3/4. Its pathway is amino-acid biosynthesis; L-valine biosynthesis; L-valine from pyruvate: step 3/4. Its function is as follows. Functions in the biosynthesis of branched-chain amino acids. Catalyzes the dehydration of (2R,3R)-2,3-dihydroxy-3-methylpentanoate (2,3-dihydroxy-3-methylvalerate) into 2-oxo-3-methylpentanoate (2-oxo-3-methylvalerate) and of (2R)-2,3-dihydroxy-3-methylbutanoate (2,3-dihydroxyisovalerate) into 2-oxo-3-methylbutanoate (2-oxoisovalerate), the penultimate precursor to L-isoleucine and L-valine, respectively. This Bacillus cereus (strain ATCC 10987 / NRS 248) protein is Dihydroxy-acid dehydratase.